Here is a 610-residue protein sequence, read N- to C-terminus: Dihydroxy-acid dehydratase (610 aa).

Residue aspartate 81 coordinates Mg(2+). Cysteine 122 contacts [2Fe-2S] cluster. The Mg(2+) site is built by aspartate 123 and lysine 124. Lysine 124 carries the N6-carboxylysine modification. Cysteine 193 provides a ligand contact to [2Fe-2S] cluster. Glutamate 489 is a binding site for Mg(2+). Serine 515 (proton acceptor) is an active-site residue.

The protein belongs to the IlvD/Edd family. As to quaternary structure, homodimer. The cofactor is [2Fe-2S] cluster. Mg(2+) is required as a cofactor.

The enzyme catalyses (2R)-2,3-dihydroxy-3-methylbutanoate = 3-methyl-2-oxobutanoate + H2O. The catalysed reaction is (2R,3R)-2,3-dihydroxy-3-methylpentanoate = (S)-3-methyl-2-oxopentanoate + H2O. The protein operates within amino-acid biosynthesis; L-isoleucine biosynthesis; L-isoleucine from 2-oxobutanoate: step 3/4. Its pathway is amino-acid biosynthesis; L-valine biosynthesis; L-valine from pyruvate: step 3/4. Functionally, functions in the biosynthesis of branched-chain amino acids. Catalyzes the dehydration of (2R,3R)-2,3-dihydroxy-3-methylpentanoate (2,3-dihydroxy-3-methylvalerate) into 2-oxo-3-methylpentanoate (2-oxo-3-methylvalerate) and of (2R)-2,3-dihydroxy-3-methylbutanoate (2,3-dihydroxyisovalerate) into 2-oxo-3-methylbutanoate (2-oxoisovalerate), the penultimate precursor to L-isoleucine and L-valine, respectively. The protein is Dihydroxy-acid dehydratase of Xylella fastidiosa (strain 9a5c).